We begin with the raw amino-acid sequence, 151 residues long: Small ribosomal subunit protein uS15 (151 aa).

An N6-acetyllysine; alternate modification is found at Lys27. Lys27 is subject to N6-succinyllysine; alternate. Lys27 is covalently cross-linked (Glycyl lysine isopeptide (Lys-Gly) (interchain with G-Cter in ubiquitin)). The residue at position 30 (Ser30) is a Phosphoserine. Lys34 is modified (N6-succinyllysine). A Phosphotyrosine modification is found at Tyr38. Residue Lys43 forms a Glycyl lysine isopeptide (Lys-Gly) (interchain with G-Cter in SUMO2) linkage.

It belongs to the universal ribosomal protein uS15 family. As to quaternary structure, component of the small ribosomal subunit. Part of the small subunit (SSU) processome, composed of more than 70 proteins and the RNA chaperone small nucleolar RNA (snoRNA) U3. In terms of processing, ubiquitinated at Lys-27 by RNF14 and RNF25 in response to ribosome collisions (ribosome stalling).

It localises to the cytoplasm. It is found in the nucleus. The protein localises to the nucleolus. Component of the small ribosomal subunit. The ribosome is a large ribonucleoprotein complex responsible for the synthesis of proteins in the cell. Part of the small subunit (SSU) processome, first precursor of the small eukaryotic ribosomal subunit. During the assembly of the SSU processome in the nucleolus, many ribosome biogenesis factors, an RNA chaperone and ribosomal proteins associate with the nascent pre-rRNA and work in concert to generate RNA folding, modifications, rearrangements and cleavage as well as targeted degradation of pre-ribosomal RNA by the RNA exosome. This is Small ribosomal subunit protein uS15 (RPS13) from Cricetulus griseus (Chinese hamster).